We begin with the raw amino-acid sequence, 379 residues long: Cytoplasmic tRNA 2-thiolation protein 1 (379 aa).

It belongs to the TtcA family. CTU1/NCS6/ATPBD3 subfamily.

Its subcellular location is the cytoplasm. The protein operates within tRNA modification; 5-methoxycarbonylmethyl-2-thiouridine-tRNA biosynthesis. Functionally, plays a central role in 2-thiolation of mcm(5)S(2)U at tRNA wobble positions of tRNA(Lys), tRNA(Glu) and tRNA(Gln). Directly binds tRNAs and probably acts by catalyzing adenylation of tRNAs, an intermediate required for 2-thiolation. It is unclear whether it acts as a sulfurtransferase that transfers sulfur from thiocarboxylated URM1 onto the uridine of tRNAs at wobble position. Prior mcm(5) tRNA modification by the elongator complex is required for 2-thiolation. May also be involved in protein urmylation. The polypeptide is Cytoplasmic tRNA 2-thiolation protein 1 (Lodderomyces elongisporus (strain ATCC 11503 / CBS 2605 / JCM 1781 / NBRC 1676 / NRRL YB-4239) (Yeast)).